The sequence spans 249 residues: Triosephosphate isomerase (249 aa).

Residues asparagine 12 and lysine 14 each coordinate substrate. The residue at position 14 (lysine 14) is an N6-acetyllysine. Asparagine 16 bears the Deamidated asparagine mark. Position 68 is a 3'-nitrotyrosine (tyrosine 68). Position 72 is a deamidated asparagine (asparagine 72). Serine 80 is modified (phosphoserine). Histidine 96 (electrophile) is an active-site residue. Serine 106 is modified (phosphoserine). Lysine 142 is covalently cross-linked (Glycyl lysine isopeptide (Lys-Gly) (interchain with G-Cter in SUMO1)). Lysine 149 carries the N6-succinyllysine modification. Lysine 156 carries the post-translational modification N6-acetyllysine; alternate. Lysine 156 bears the N6-succinyllysine; alternate mark. Serine 159 carries the phosphoserine modification. Residue glutamate 166 is the Proton acceptor of the active site. Position 173 is a phosphothreonine (threonine 173). N6-acetyllysine; alternate is present on lysine 194. An N6-succinyllysine; alternate modification is found at lysine 194. Residue lysine 194 is modified to N6-methyllysine; alternate. Serine 198 is modified (phosphoserine). Tyrosine 209 carries the 3'-nitrotyrosine modification. The residue at position 212 (serine 212) is a Phosphoserine. Threonine 214 carries the phosphothreonine modification. Serine 223 bears the Phosphoserine mark. The residue at position 238 (lysine 238) is an N6-acetyllysine.

The protein belongs to the triosephosphate isomerase family. As to quaternary structure, homodimer. Asn-16 and Asn-72 undergo deamidation which gives rise to four extra negative charges. These are expected to decrease subunit-subunit interactions and so expose the hydrophobic interface to the aqueous environment.

It is found in the cytoplasm. The enzyme catalyses D-glyceraldehyde 3-phosphate = dihydroxyacetone phosphate. It carries out the reaction dihydroxyacetone phosphate = methylglyoxal + phosphate. It functions in the pathway carbohydrate degradation; glycolysis; D-glyceraldehyde 3-phosphate from glycerone phosphate: step 1/1. It participates in carbohydrate biosynthesis; gluconeogenesis. Triosephosphate isomerase is an extremely efficient metabolic enzyme that catalyzes the interconversion between dihydroxyacetone phosphate (DHAP) and D-glyceraldehyde-3-phosphate (G3P) in glycolysis and gluconeogenesis. Functionally, it is also responsible for the non-negligible production of methylglyoxal a reactive cytotoxic side-product that modifies and can alter proteins, DNA and lipids. This Oryctolagus cuniculus (Rabbit) protein is Triosephosphate isomerase (TPI1).